We begin with the raw amino-acid sequence, 427 residues long: MTEAMKITLSTQPADARWGDKATYSINNDGITLHLNGKDDLGLIQRAARKIDGLGIKQVALTGEGWDTERCWAFWAGYKGPKGVRTVMWPDLDDAQRQELDNRLTIIDWVRDTINAPAEELGPEQLAQRAVDLLCSVACDSVTYRITKGEDLREQNYMGLHTVGRGSERPPVLLALDYNPTGDKDAPVYACLVGKGITFDSGGYSIKQSAFMDSMKSDMGGAATVTGALAFAITRGLNKRVKLFLCCADNLISGNAFKLGDIIRYRNGKNVEVMNTDAEGRLVLADGLIDASAQHPRLIIDMATLTGAAKTALGNDYHALFSFDDTLAGRLLTSAAQENEPFWRLPLAEFHRNQLPSNFAELNNTGSATYPAGASTAAGFLSHFVENYREGWLHIDCSATYRKAPVEQWAAGATGLGVRTIANLLTA.

Residues Lys195 and Asp200 each contribute to the Mn(2+) site. Lys207 is an active-site residue. Mn(2+) is bound by residues Asp218, Asp277, and Glu279. The active site involves Arg281.

It belongs to the peptidase M17 family. In terms of assembly, homohexamer. Requires Mn(2+) as cofactor.

It localises to the cytoplasm. It carries out the reaction Release of an N-terminal amino acid, Xaa, from a peptide or arylamide. Xaa is preferably Glu or Asp but may be other amino acids, including Leu, Met, His, Cys and Gln.. Probably plays an important role in intracellular peptide degradation. The protein is Peptidase B of Salmonella typhi.